The sequence spans 479 residues: Gamma-aminobutyric acid receptor subunit rho-1 (479 aa).

The N-terminal stretch at 1–21 (MLAVPNMRFGIFLLWWGWVLA) is a signal peptide. Over 22 to 280 (TESRMHWPGR…LYINFTLRRH (259 aa)) the chain is Extracellular. Positions 32–55 (EVHEMSKKGRPQRQRREVHEDAHK) are disordered. Residues 45–55 (QRREVHEDAHK) show a composition bias toward basic and acidic residues. Arg125 contacts 4-aminobutanoate. Asn140 carries N-linked (GlcNAc...) asparagine glycosylation. Residue Ser189 participates in 4-aminobutanoate binding. A disulfide bridge connects residues Cys198 and Cys212. Residue Glu217 participates in 4-aminobutanoate binding. 2 N-linked (GlcNAc...) asparagine glycosylation sites follow: Asn234 and Asn274. Residues 281–301 (IFFFLLQTYFPATLMVMLSWV) form a helical membrane-spanning segment. The Cytoplasmic portion of the chain corresponds to 302–313 (SFWIDRRAVPAR). A helical membrane pass occupies residues 314–334 (VPLGITTVLTMSTIITGVNAS). Residues 335–345 (MPRVSYIKAVD) are Extracellular-facing. A helical transmembrane segment spans residues 346–366 (IYLWVSFVFVFLSVLEYAAVN). The Cytoplasmic portion of the chain corresponds to 367–457 (YLTTVQERKE…MRIDTHAIDK (91 aa)). The helical transmembrane segment at 458–478 (YSRIIFPAAYILFNLIYWSIF) threads the bilayer. Position 479 (Ser479) is a topological domain, extracellular.

The protein belongs to the ligand-gated ion channel (TC 1.A.9) family. Gamma-aminobutyric acid receptor (TC 1.A.9.5) subfamily. GABRR1 sub-subfamily. As to quaternary structure, three rho subunits (rho-1/GBRR1, rho-2/GBRR2 and rho-3/GBRR3) coassemble either to form functional homopentamers or heteropentamers. Rho-1/GBRR1 subunits can also associate with alpha-1/GBRA1 subunits to form a functional GABAAR. Interacts with SQSTM1. As to expression, highly expressed in the retina. Expressed in a lesser extent in brain, lung and thymus.

It localises to the postsynaptic cell membrane. Its subcellular location is the cell membrane. The catalysed reaction is chloride(in) = chloride(out). With respect to regulation, inhibited by TPMPA, a rho-specific antagonist, when forming a homopentamer. In contrast with other GABAARs, rho-1 GABAAR is not inhibited by bicuculline, when forming a homopentamer. Functionally, rho subunit of the pentameric ligand-gated chloride channels responsible for mediating the effects of gamma-aminobutyric acid (GABA), the major inhibitory neurotransmitter in the brain. Rho-containing GABA-gated chloride channels are a subclass of GABA(A) receptors (GABAARs) entirely composed of rho subunits, where GABA molecules bind at the rho intersubunit interfaces. When activated by GABA, rho-GABAARs selectively allow the flow of chloride anions across the cell membrane down their electrochemical gradient. Rho-1 subunits are primarily expressed in retina where rho-1-containing GABAARs may play a role in retinal neurotransmission. Rho-1 GABAARs are also involved in neuronal tonic (extrasynaptic) and phasic (synaptic) transmission in the Purkinje neurons of the cerebellum. Rho-1 GABAARs may also contribute to the regulation of glial development in the cerebellum by controlling extrasynaptic transmission. In Homo sapiens (Human), this protein is Gamma-aminobutyric acid receptor subunit rho-1.